A 524-amino-acid chain; its full sequence is Putative cysteine ligase BshC (524 aa).

The stretch at 437 to 457 (AQALDRSARKINYQIEKMERK) forms a coiled coil.

The protein belongs to the BshC family.

In Solibacter usitatus (strain Ellin6076), this protein is Putative cysteine ligase BshC.